The sequence spans 472 residues: Carboxypeptidase Q (472 aa).

A signal peptide spans 1–20 (MKFLIFAFFGGVHLLSLCSG). Residues 21-44 (KAICKNGISKRTFEEIKEEIASCG) constitute a propeptide that is removed on maturation. 2 N-linked (GlcNAc...) asparagine glycosylation sites follow: N61 and N179. The Zn(2+) site is built by H290 and D302. E336 serves as the catalytic Nucleophile. E337 is a Zn(2+) binding site. N-linked (GlcNAc...) asparagine glycosylation is found at N353 and N356. Residue D364 participates in Zn(2+) binding. N396 is a glycosylation site (N-linked (GlcNAc...) asparagine). A Zn(2+)-binding site is contributed by H434.

The protein belongs to the peptidase M28 family. As to quaternary structure, homodimer. The monomeric form is inactive while the homodimer is active. In terms of processing, N-glycosylated. The secreted form is modified by hybrid or complex type oligosaccharide chains. In terms of tissue distribution, mainly detected in blood plasma. Abundant in placenta and kidney. Present at low level in muscles, liver and skin fibroblasts. Not detected in brain or white blood cells (at protein level).

The protein resides in the endoplasmic reticulum. It localises to the golgi apparatus. Its subcellular location is the lysosome. The protein localises to the secreted. Carboxypeptidase that may play an important role in the hydrolysis of circulating peptides. Catalyzes the hydrolysis of dipeptides with unsubstituted terminals into amino acids. May play a role in the liberation of thyroxine hormone from its thyroglobulin (Tg) precursor. The protein is Carboxypeptidase Q (CPQ) of Homo sapiens (Human).